The chain runs to 407 residues: Argininosuccinate synthase (407 aa).

Residues 10–18 (AYSGGLDTS) and Ala37 each bind ATP. L-citrulline contacts are provided by Tyr90 and Ser95. ATP is bound at residue Gly120. L-aspartate contacts are provided by Thr122, Asn126, and Asp127. L-citrulline is bound at residue Asn126. L-citrulline is bound by residues Arg130, Ser181, Ser190, Glu266, and Tyr278.

This sequence belongs to the argininosuccinate synthase family. Type 1 subfamily. Homotetramer.

Its subcellular location is the cytoplasm. It catalyses the reaction L-citrulline + L-aspartate + ATP = 2-(N(omega)-L-arginino)succinate + AMP + diphosphate + H(+). It participates in amino-acid biosynthesis; L-arginine biosynthesis; L-arginine from L-ornithine and carbamoyl phosphate: step 2/3. This chain is Argininosuccinate synthase, found in Ruegeria sp. (strain TM1040) (Silicibacter sp.).